The chain runs to 143 residues: Transcription antitermination protein NusB (143 aa).

The protein belongs to the NusB family.

Its function is as follows. Involved in transcription antitermination. Required for transcription of ribosomal RNA (rRNA) genes. Binds specifically to the boxA antiterminator sequence of the ribosomal RNA (rrn) operons. This is Transcription antitermination protein NusB from Buchnera aphidicola subsp. Acyrthosiphon pisum (strain 5A).